A 581-amino-acid polypeptide reads, in one-letter code: A-type ATP synthase subunit A (581 aa).

Gly234 to Thr241 serves as a coordination point for ATP.

The protein belongs to the ATPase alpha/beta chains family. Has multiple subunits with at least A(3), B(3), C, D, E, F, H, I and proteolipid K(x).

It localises to the cell membrane. The enzyme catalyses ATP + H2O + 4 H(+)(in) = ADP + phosphate + 5 H(+)(out). Functionally, component of the A-type ATP synthase that produces ATP from ADP in the presence of a proton gradient across the membrane. The A chain is the catalytic subunit. In Archaeoglobus fulgidus (strain ATCC 49558 / DSM 4304 / JCM 9628 / NBRC 100126 / VC-16), this protein is A-type ATP synthase subunit A.